The sequence spans 246 residues: 1-(5-phosphoribosyl)-5-[(5-phosphoribosylamino)methylideneamino] imidazole-4-carboxamide isomerase (246 aa).

Asp7 serves as the catalytic Proton acceptor. The active-site Proton donor is the Asp129.

Belongs to the HisA/HisF family.

It localises to the cytoplasm. The catalysed reaction is 1-(5-phospho-beta-D-ribosyl)-5-[(5-phospho-beta-D-ribosylamino)methylideneamino]imidazole-4-carboxamide = 5-[(5-phospho-1-deoxy-D-ribulos-1-ylimino)methylamino]-1-(5-phospho-beta-D-ribosyl)imidazole-4-carboxamide. Its pathway is amino-acid biosynthesis; L-histidine biosynthesis; L-histidine from 5-phospho-alpha-D-ribose 1-diphosphate: step 4/9. The sequence is that of 1-(5-phosphoribosyl)-5-[(5-phosphoribosylamino)methylideneamino] imidazole-4-carboxamide isomerase from Buchnera aphidicola subsp. Acyrthosiphon pisum (strain 5A).